The chain runs to 3677 residues: Dystrophin (3677 aa).

The interval 1–240 (MLWWEEVEDC…YITSLFQVLP (240 aa)) is actin-binding. Calponin-homology (CH) domains follow at residues 15–119 (DVQK…LHWQ) and 134–240 (TNSE…QVLP). The segment at 63–72 (PKEKGSTRVH) is ANK2- and ANK-3 binding. 23 Spectrin repeats span residues 342–447 (LDSY…SNLH), 451–557 (MDLQ…LLQD), 560–668 (LKWQ…QISQ), 728–828 (DITE…NWLE), 831–935 (NNII…ELQT), 944–1046 (RYQE…KLEE), 1049–1154 (NKLR…EALK), 1163–1264 (LQKD…TLEE), 1268–1464 (CWHE…LFQK), 1469–1569 (EQRL…QLEK), 1573–1676 (LSRK…NLLL), 1680–1777 (KHME…TGKA), 1779–1875 (IPLK…KALE), 1878–1980 (HQWY…TLHE), 2001–2098 (YLTE…ERQG), 2106–2209 (KWRH…RVEE), 2215–2316 (SEFQ…GELE), 2317–2415 (VHIK…LRTK), 2465–2569 (ADFN…QLNE), 2576–2678 (QWLE…ALEE), 2682–2786 (LLQQ…KKSL), 2800–2922 (KRLH…RKID), and 2927–3032 (RLQE…QLHE). Positions 1416 to 1914 (SDLTSHEISL…PEPRDERKIK (499 aa)) are interaction with SYNM. The 34-residue stretch at 3047–3080 (TSVQGPWERAISPNKVPYYINHETQTTCWDHPKM) folds into the WW domain. Residues 3050-3400 (QGPWERAISP…TVLEGDNMET (351 aa)) form an interaction with SYNM region. The ZZ-type; degenerate zinc finger occupies 3300–3356 (KHQAKCNICKECPIIGFRYRSLKHFNYDICQSCFFSGRVAKGHKMHYPMVEYCTPTT). Residues cysteine 3305, cysteine 3308, cysteine 3329, and cysteine 3332 each contribute to the Zn(2+) site. The interval 3458 to 3510 (DDEHLLIQHYCQSLNQDSPLSQPRSPAQILISLESEERGELERILADLEEENR) is binds to SNTB1. Phosphoserine is present on residues serine 3475, serine 3482, and serine 3492. 2 disordered regions span residues 3520–3546 (KQQHEHKGLSPLPSPPEMMPTSPQSPR) and 3595–3677 (EAKV…EDTM). Composition is skewed to polar residues over residues 3599-3618 (NGTTVSSPSTSLQRSDSSQP) and 3654-3664 (QLNNSFPSSRG). 6 positions are modified to phosphoserine: serine 3604, serine 3605, serine 3609, serine 3615, serine 3616, and serine 3658.

As to quaternary structure, interacts with SYNM. Interacts with the syntrophins SNTG1 and SNTG2. Interacts with KRT19. Component of the dystrophin-associated glycoprotein complex which is composed of three subcomplexes: a cytoplasmic complex comprised of DMD (or UTRN), DTNA and a number of syntrophins, such as SNTB1, SNTB2, SNTG1 and SNTG2, the transmembrane dystroglycan complex, and the sarcoglycan-sarcospan complex. Interacts with DAG1 (betaDAG1) with DMD; the interaction is inhibited by phosphorylation on the PPXY motif of DAG1. Interacts with SYNM; SNTA1 and SNTB1. Interacts with CMYA5. Directly interacts with ANK2 and ANK3; these interactions do not interfere with betaDAG1-binding and are necessary for proper localization in muscle cells. Identified in a dystroglycan complex that contains at least PRX, DRP2, UTRN, DMD and DAG1. Interacts with DTNB. Interacts with PGM5; the interaction is direct. Interacts with NOS1; localizes NOS1 to sarcolemma in muscle cells. Strongly expressed in skeletal muscle and weak expression observed in newborn brain which increases in adult brain.

It is found in the cell membrane. It localises to the sarcolemma. The protein resides in the cytoplasm. Its subcellular location is the cytoskeleton. The protein localises to the postsynaptic cell membrane. Its function is as follows. Anchors the extracellular matrix to the cytoskeleton via F-actin. Ligand for dystroglycan. Component of the dystrophin-associated glycoprotein complex which accumulates at the neuromuscular junction (NMJ) and at a variety of synapses in the peripheral and central nervous systems and has a structural function in stabilizing the sarcolemma. Also implicated in signaling events and synaptic transmission. The polypeptide is Dystrophin (Dmd) (Rattus norvegicus (Rat)).